The chain runs to 234 residues: Opacity protein opA55 (234 aa).

Residue Ala-1 is a signal peptide.

The protein belongs to the opacity porin family.

It is found in the cell outer membrane. Its function is as follows. Implicated in a number of adherence functions. OPA proteins are implicated in pathogenesis and are subject to phase variation. In Neisseria gonorrhoeae, this protein is Opacity protein opA55 (opaE).